A 377-amino-acid chain; its full sequence is UPF0754 membrane protein GTNG_0550 (377 aa).

The next 2 membrane-spanning stretches (helical) occupy residues 7-27 and 357-377; these read LLFM…IAIV and YLGA…GLWL.

It belongs to the UPF0754 family.

The protein resides in the cell membrane. The chain is UPF0754 membrane protein GTNG_0550 from Geobacillus thermodenitrificans (strain NG80-2).